The primary structure comprises 199 residues: NADH-quinone oxidoreductase subunit B 2 (199 aa).

4 residues coordinate [4Fe-4S] cluster: C78, C79, C143, and C173.

It belongs to the complex I 20 kDa subunit family. NDH-1 is composed of 14 different subunits. Subunits NuoB, C, D, E, F, and G constitute the peripheral sector of the complex. The cofactor is [4Fe-4S] cluster.

It localises to the cell inner membrane. It catalyses the reaction a quinone + NADH + 5 H(+)(in) = a quinol + NAD(+) + 4 H(+)(out). Its function is as follows. NDH-1 shuttles electrons from NADH, via FMN and iron-sulfur (Fe-S) centers, to quinones in the respiratory chain. The immediate electron acceptor for the enzyme in this species is believed to be ubiquinone. Couples the redox reaction to proton translocation (for every two electrons transferred, four hydrogen ions are translocated across the cytoplasmic membrane), and thus conserves the redox energy in a proton gradient. This Rhodopseudomonas palustris (strain BisB5) protein is NADH-quinone oxidoreductase subunit B 2.